The sequence spans 428 residues: D-amino acid dehydrogenase (428 aa).

3–17 (VVVLGSGVVGVTSAY) provides a ligand contact to FAD.

This sequence belongs to the DadA oxidoreductase family. FAD is required as a cofactor.

The catalysed reaction is a D-alpha-amino acid + A + H2O = a 2-oxocarboxylate + AH2 + NH4(+). It participates in amino-acid degradation; D-alanine degradation; NH(3) and pyruvate from D-alanine: step 1/1. Its function is as follows. Oxidative deamination of D-amino acids. This Paraburkholderia phymatum (strain DSM 17167 / CIP 108236 / LMG 21445 / STM815) (Burkholderia phymatum) protein is D-amino acid dehydrogenase.